The following is an 824-amino-acid chain: Dapper 1 (824 aa).

5 disordered regions span residues M1–R34, A61–P80, E131–G150, T454–Q487, and A516–Q536. The interval K2–S343 is interaction with tcf7l1. Over residues L11–R34 the composition is skewed to basic and acidic residues. A coiled-coil region spans residues R19–L47. Over residues F520–S530 the composition is skewed to basic and acidic residues. Positions M821 to V824 match the PDZ-binding motif.

The protein belongs to the dapper family. In terms of assembly, interacts with dbf4, dvl2 and tcf7l1.

It is found in the cytoplasm. It localises to the nucleus. Functionally, involved in regulation of intracellular signaling pathways during development. Specifically thought to play a role in canonical and/or non-canonical Wnt signaling pathways through interaction with DSH (Dishevelled) family proteins. Binds to dvl2 and regulates the degradation of ctnnb1/beta-catenin, thereby modulating the transcriptional activation of target genes of the Wnt signaling pathway. May also bind to and directly stimulate the activity of tcf7l1. The sequence is that of Dapper 1 (dact1) from Xenopus tropicalis (Western clawed frog).